A 214-amino-acid polypeptide reads, in one-letter code: Metalloproteinase inhibitor 3 (214 aa).

An N-terminal signal peptide occupies residues 1-26 (MVFSTTAALSLLLALSSMQLSEVSEA). C27 provides a ligand contact to Zn(2+). Involved in metalloproteinase-binding stretches follow at residues 27–30 (CTCM) and 91–92 (ES). 6 disulfide bridges follow: C27–C94, C29–C121, C39–C146, C148–C195, C153–C158, and C166–C187. Residues 27–146 (CTCMPNHPQE…GLNHRYQYGC (120 aa)) enclose the NTR domain. N-linked (GlcNAc...) asparagine glycosylation occurs at N210.

The protein belongs to the protease inhibitor I35 (TIMP) family. In terms of tissue distribution, expressed abundantly in brain and cartilage.

The protein localises to the secreted. It localises to the extracellular space. Its subcellular location is the extracellular matrix. Complexes with metalloproteinases (such as collagenases) and irreversibly inactivates them by binding to their catalytic zinc cofactor. May form part of a tissue-specific acute response to remodeling stimuli. The sequence is that of Metalloproteinase inhibitor 3 (TIMP3) from Scyliorhinus torazame (Cloudy catshark).